We begin with the raw amino-acid sequence, 366 residues long: Peptide chain release factor 1 (366 aa).

Gln239 bears the N5-methylglutamine mark.

Belongs to the prokaryotic/mitochondrial release factor family. Post-translationally, methylated by PrmC. Methylation increases the termination efficiency of RF1.

Its subcellular location is the cytoplasm. Functionally, peptide chain release factor 1 directs the termination of translation in response to the peptide chain termination codons UAG and UAA. This Albidiferax ferrireducens (strain ATCC BAA-621 / DSM 15236 / T118) (Rhodoferax ferrireducens) protein is Peptide chain release factor 1.